The primary structure comprises 322 residues: MPIAEEEKLLPLTQRWPRTSKFLLSGCAATVAELATFPLDLTKTRLQMQGEAALARLGDGAVDSAPYRGMVRTALGIVQEEGFLKLWQGVTPAIYRHVVYSGGRMVTYEHLREVVFGKSEDKHYPLWKSVIGGMMAGVIGQFLANPTDLVKVQMQMEGKRRLEGKPLRFRGVHHAFAKILAEGGIRGLWAGWIPNIQRAALVNMGDLTTYDTVKHYLVLNTPLEDNISTHGLSSLCSGLVASILGTPADVIKSRIMNQPRDKQGRGLLYKSSADCLIQAVQGEGFLSLYKGFLPSWLRMTPWSMVFWLTYEKIREMSGVSPF.

Solcar repeat units follow at residues 20–114 (SKFL…LREV), 124–216 (YPLW…VKHY), and 225–316 (DNIS…IREM). 6 helical membrane-spanning segments follow: residues 22-39 (FLLS…TFPL), 87-108 (WQGV…MVTY), 126-143 (LWKS…GQFL), 194-211 (PNIQ…TTYD), 228-247 (STHG…LGTP), and 287-310 (SLYK…WLTY).

It belongs to the mitochondrial carrier (TC 2.A.29) family. In terms of assembly, homotetramer.

It is found in the mitochondrion inner membrane. It localises to the cell projection. Its subcellular location is the neuron projection. It catalyses the reaction H(+)(in) = H(+)(out). The catalysed reaction is chloride(in) = chloride(out). Functionally, facilitates proton transport across the inner mitochondrial membrane and may dissipate excessive proton gradient associated with oxidative and metabolic stress at neuronal synapses. Regulates glutamate-induced proton conductance in astrocytes, shifting the energy metabolism toward aerobic glycolysis and lactate transfer to neurons for ATP synthesis. Can transport chloride ions with lower efficiency. The transport mechanism remains to be elucidated. The sequence is that of Mitochondrial uncoupling protein 4 from Mus musculus (Mouse).